The chain runs to 131 residues: Superoxide dismutase [Ni] (131 aa).

The propeptide occupies 1-14 (MLSRLFAPKVTVSA). Ni(2+) contacts are provided by His-15, Cys-16, and Cys-20.

Belongs to the nickel superoxide dismutase family. In terms of assembly, homohexamer. The hexameric protein has a roughly the shape of a hollow sphere with an outer diameter of 60 angstroms and a large interior cavity. Requires Ni(2+) as cofactor.

It localises to the cytoplasm. It carries out the reaction 2 superoxide + 2 H(+) = H2O2 + O2. In Streptomyces coelicolor (strain ATCC BAA-471 / A3(2) / M145), this protein is Superoxide dismutase [Ni] (sodN).